Consider the following 178-residue polypeptide: ATP synthase subunit delta (178 aa).

It belongs to the ATPase delta chain family. In terms of assembly, F-type ATPases have 2 components, F(1) - the catalytic core - and F(0) - the membrane proton channel. F(1) has five subunits: alpha(3), beta(3), gamma(1), delta(1), epsilon(1). F(0) has three main subunits: a(1), b(2) and c(10-14). The alpha and beta chains form an alternating ring which encloses part of the gamma chain. F(1) is attached to F(0) by a central stalk formed by the gamma and epsilon chains, while a peripheral stalk is formed by the delta and b chains.

The protein resides in the cell membrane. Its function is as follows. F(1)F(0) ATP synthase produces ATP from ADP in the presence of a proton or sodium gradient. F-type ATPases consist of two structural domains, F(1) containing the extramembraneous catalytic core and F(0) containing the membrane proton channel, linked together by a central stalk and a peripheral stalk. During catalysis, ATP synthesis in the catalytic domain of F(1) is coupled via a rotary mechanism of the central stalk subunits to proton translocation. This protein is part of the stalk that links CF(0) to CF(1). It either transmits conformational changes from CF(0) to CF(1) or is implicated in proton conduction. The sequence is that of ATP synthase subunit delta from Geobacillus stearothermophilus (Bacillus stearothermophilus).